We begin with the raw amino-acid sequence, 187 residues long: uncharacterized protein (187 aa).

The chain crosses the membrane as a helical span at residues 3–23 (AIIIFLILFIVGVLIGVGVYY).

The protein resides in the membrane. This is an uncharacterized protein from Methanocaldococcus jannaschii (strain ATCC 43067 / DSM 2661 / JAL-1 / JCM 10045 / NBRC 100440) (Methanococcus jannaschii).